Here is a 351-residue protein sequence, read N- to C-terminus: tRNA N6-adenosine threonylcarbamoyltransferase (351 aa).

Fe cation contacts are provided by histidine 124 and histidine 128. Substrate is bound by residues 146 to 150, aspartate 180, glycine 193, aspartate 197, and asparagine 285; that span reads LVSGG. Aspartate 313 serves as a coordination point for Fe cation.

It belongs to the KAE1 / TsaD family. Fe(2+) serves as cofactor.

Its subcellular location is the cytoplasm. The enzyme catalyses L-threonylcarbamoyladenylate + adenosine(37) in tRNA = N(6)-L-threonylcarbamoyladenosine(37) in tRNA + AMP + H(+). Functionally, required for the formation of a threonylcarbamoyl group on adenosine at position 37 (t(6)A37) in tRNAs that read codons beginning with adenine. Is involved in the transfer of the threonylcarbamoyl moiety of threonylcarbamoyl-AMP (TC-AMP) to the N6 group of A37, together with TsaE and TsaB. TsaD likely plays a direct catalytic role in this reaction. The protein is tRNA N6-adenosine threonylcarbamoyltransferase of Mycobacterium leprae (strain TN).